A 56-amino-acid polypeptide reads, in one-letter code: U4-myrmicitoxin-Tb1a (56 aa).

The N-terminal stretch at 1 to 26 is a signal peptide; that stretch reads MQPSYLLLTFAIIFVMVIMYSPAVEA. Positions 27 to 40 are excised as a propeptide; that stretch reads KAGADADADAHADA. Glycine 53 is subject to Glycine amide.

Post-translationally, contains 1 disulfide bond. As to expression, expressed by the venom gland.

It is found in the secreted. Functionally, venom protein with unknown function. Does not induce paralysis when a high dose is administered by intrathoracic injection into the blowfly Lucilia caesar. The protein is U4-myrmicitoxin-Tb1a of Tetramorium bicarinatum (Tramp ant).